A 496-amino-acid chain; its full sequence is Hexokinase-1 (496 aa).

The helical transmembrane segment at 4–24 (VAVGATVVCTAAVCAVAVLVV) threads the bilayer. In terms of domain architecture, Hexokinase spans 35–487 (GRVLAILKAF…SGIGAALLAA (453 aa)). A hexokinase small subdomain region spans residues 90 to 228 (SGDEKGLFYA…GLDMRIAALV (139 aa)). ADP is bound by residues glycine 104, threonine 105, and asparagine 106. Positions 194, 195, 229, and 230 each coordinate D-glucose. Residues 229 to 476 (NDTVGTLAGG…GSVEVTHSND (248 aa)) form a hexokinase large subdomain region. Threonine 253 provides a ligand contact to ADP. Residues asparagine 256, glutamate 284, and glutamate 315 each contribute to the D-glucose site. Glycine 441 is a binding site for ADP.

Belongs to the hexokinase family. In terms of assembly, interacts with RPT5B in nucleus. Interacts with RHIP1. Interacts with KING1 in mitochondria. Interacts with CLF (via SANT domain) and EZA1/SWN (via SANT domain) in nucleus. Highly expressed in flowers and siliques, at intermediate levels in roots and stems, and at lower levels in rosette and cauline leaves.

The protein resides in the mitochondrion outer membrane. Its subcellular location is the nucleus. The catalysed reaction is a D-hexose + ATP = a D-hexose 6-phosphate + ADP + H(+). The enzyme catalyses D-fructose + ATP = D-fructose 6-phosphate + ADP + H(+). It catalyses the reaction D-glucose + ATP = D-glucose 6-phosphate + ADP + H(+). The protein operates within carbohydrate metabolism; hexose metabolism. It participates in carbohydrate degradation; glycolysis; D-glyceraldehyde 3-phosphate and glycerone phosphate from D-glucose: step 1/4. Fructose and glucose phosphorylating enzyme. May be involved in the phosphorylation of glucose during the export from mitochondrion to cytosol. Acts as a sugar sensor which may regulate sugar-dependent gene repression or activation. Mediates the effects of sugar on plant growth and development independently of its catalytic activity or the sugar metabolism. May regulate the execution of program cell death in plant cells. Promotes roots and leaves growth. Together with sugar, is involved in the regulation of the expression of aquaporin genes, and reduces leaf water conductance, to coordinate sugar levels with the loss of water through transpiration. Regulates cell proliferation and expansion early during leaf development. Involved in sucrose-induced leaf growth stimulation independently of GPT2. May participate to the stimulation of hypocotyl elongation under long-day (LD) conditions. Forms a nuclear complex with CLF and EZA1/SWN to target common glucose-responsive genes and regulate glucose signaling. Is required for CLF- and EZA1/SWN-mediated histone H3 trimethylation on 'Lys-27' (H3K27me3) and glucose-mediated gene repression. In Arabidopsis thaliana (Mouse-ear cress), this protein is Hexokinase-1.